Consider the following 192-residue polypeptide: Ion-translocating oxidoreductase complex subunit B (192 aa).

Residues 1-26 form a hydrophobic region; it reads MSTIWIAIAALSALALAFGLVLGYAS. In terms of domain architecture, 4Fe-4S spans 32 to 91; that stretch reads ENDPIVEEVEAMLPQSQCGQCGYPGCRPYAEAVALNGENINKCGPGGEAMMLKLAEKLNV. The [4Fe-4S] cluster site is built by Cys-49, Cys-52, Cys-57, Cys-74, Cys-117, Cys-120, Cys-123, Cys-127, Cys-147, Cys-150, Cys-153, and Cys-157. 4Fe-4S ferredoxin-type domains lie at 108-137 and 138-167; these read QVAW…GSTK and AVHT…LRPI.

It belongs to the 4Fe4S bacterial-type ferredoxin family. RnfB subfamily. As to quaternary structure, the complex is composed of six subunits: RnfA, RnfB, RnfC, RnfD, RnfE and RnfG. [4Fe-4S] cluster serves as cofactor.

It is found in the cell inner membrane. Part of a membrane-bound complex that couples electron transfer with translocation of ions across the membrane. This Pectobacterium carotovorum subsp. carotovorum (strain PC1) protein is Ion-translocating oxidoreductase complex subunit B.